The primary structure comprises 79 residues: uncharacterized protein (79 aa).

The span at 22–72 (NNNNNNNNNNNNNNNNNNNNNNNNNNNNNNNNNNNNNNNNNNNNNNNNNNN) shows a compositional bias: low complexity. Residues 22-79 (NNNNNNNNNNNNNNNNNNNNNNNNNNNNNNNNNNNNNNNNNNNNNNNNNNNKRFFFFG) are disordered.

This is an uncharacterized protein from Dictyostelium discoideum (Social amoeba).